The primary structure comprises 584 residues: Proline--tRNA ligase (584 aa).

Belongs to the class-II aminoacyl-tRNA synthetase family. ProS type 1 subfamily. Homodimer.

Its subcellular location is the cytoplasm. It carries out the reaction tRNA(Pro) + L-proline + ATP = L-prolyl-tRNA(Pro) + AMP + diphosphate. Catalyzes the attachment of proline to tRNA(Pro) in a two-step reaction: proline is first activated by ATP to form Pro-AMP and then transferred to the acceptor end of tRNA(Pro). As ProRS can inadvertently accommodate and process non-cognate amino acids such as alanine and cysteine, to avoid such errors it has two additional distinct editing activities against alanine. One activity is designated as 'pretransfer' editing and involves the tRNA(Pro)-independent hydrolysis of activated Ala-AMP. The other activity is designated 'posttransfer' editing and involves deacylation of mischarged Ala-tRNA(Pro). The misacylated Cys-tRNA(Pro) is not edited by ProRS. The chain is Proline--tRNA ligase from Mycobacterium sp. (strain KMS).